Reading from the N-terminus, the 166-residue chain is Transcription antitermination protein NusB (166 aa).

The span at 1 to 18 (MISDESDRFNPRDPKPAD) shows a compositional bias: basic and acidic residues. Residues 1–30 (MISDESDRFNPRDPKPADAGKPSKSAKRRE) form a disordered region.

The protein belongs to the NusB family.

Its function is as follows. Involved in transcription antitermination. Required for transcription of ribosomal RNA (rRNA) genes. Binds specifically to the boxA antiterminator sequence of the ribosomal RNA (rrn) operons. The chain is Transcription antitermination protein NusB from Pseudomonas entomophila (strain L48).